A 360-amino-acid polypeptide reads, in one-letter code: Ferredoxin--NADP reductase, leaf isozyme 1, chloroplastic (360 aa).

The transit peptide at 1–49 (MAAAISAAVSLPSSKSSSLLTKISSVSPQRIFLKKSTVCYRRVVSVKAQ) directs the protein to the chloroplast. Positions 81–203 (KNPYTGRCLL…TGPVGKEMLM (123 aa)) constitute an FAD-binding FR-type domain. Residues 139-142 (RLYS), 160-162 (CVK), Tyr166, and 177-179 (VCS) each bind FAD. The NADP(+) site is built by Ser142 and Lys162. Residues Cys178 and Cys183 are joined by a disulfide bond. Position 179 is a phosphoserine (Ser179). A Phosphothreonine modification is found at Thr210. Thr218 is a binding site for FAD. Residues Thr218, 250–251 (VP), 280–281 (SR), Lys290, 319–320 (GL), and Glu358 contribute to the NADP(+) site.

This sequence belongs to the ferredoxin--NADP reductase type 1 family. As to quaternary structure, heterodimer with LFNR2. Interacts with PGRL1A and PGRL1B. Interacts with TIC62. Component of high molecular weight thylakoid LFNRs-containing protein complexes containing LIR1, LFNR1, LFNR2, TIC62 and TROL proteins. Interacts directly with LIR1 and TIC62; LIR1 increases the affinity of LFNR1 and LFNR2 for TIC62. Binds to YCF54 in chloroplasts. It depends on FAD as a cofactor. In terms of processing, may form interchain disulfide bonds with LIR1. In terms of tissue distribution, expressed in shoots. Restricted to green tissues, being more abundant in siliques.

The protein localises to the plastid. It localises to the chloroplast stroma. Its subcellular location is the chloroplast thylakoid membrane. It catalyses the reaction 2 reduced [2Fe-2S]-[ferredoxin] + NADP(+) + H(+) = 2 oxidized [2Fe-2S]-[ferredoxin] + NADPH. It functions in the pathway energy metabolism; photosynthesis. Functionally, plays a key role in regulating the relative amounts of cyclic and non-cyclic electron flow to meet the demands of the plant for ATP and reducing power. Probable electron donor required for the MgProto monomethylester (MgProtoME) cyclase complex reaction to form protochlorophyllide, thus connecting chlorophyll synthesis with photosynthetic activity. In Arabidopsis thaliana (Mouse-ear cress), this protein is Ferredoxin--NADP reductase, leaf isozyme 1, chloroplastic.